The primary structure comprises 2694 residues: MASRERLFELWMLYCTKKDPDYLKLWLDTFVSSYEQFLDVDFEKLPTRVDDMPPGISLLPDNILQVLRIQLLQCVQKMADGLEEQQQALSILLVKFFIILCRNLSNVEEIGTCSYINYVITMTTLYIQQLKSKKKEKEMADQTCIEEFVIHALAFCESLYDPYRNWRHRISGRILSTVEKSRQKYKPASLTVEFVPFFYQCFQESEHLKESLKCCLLHLFGAIVAGGQRNALQAISPATMEVLMRVLADCDSWEDGDPEEVGRKAELTLKCLTEVVHILLSSNSDQRQVETSTILENYFKLLNSDHSALPNQRRSRQWENRFIALQIKMLNTITAMLDCTDRPVLQAIFLNSNCFEHLIRLLQNCKVFQGQLDCLAISTIQALTAVMNKSPAAKEVFKERIGYTHMLEVLKSLGQPPLELLKELMNMAVEGDHTSVGILGISNVQPLLLLIQWLPELQSHDLQIFISDWLKRICCINRQSRTTCVNANMGIRIIETLDLHSSLHQTCAENLIAIHGSLGSQSVSSEEIRRLLRLLRVDESESVHPYVTPVTRAILTMARKLSLESALQYFNLSHSMAGISVPPIQKWPGSAFSFSAWFCLDQDQLTLGIANKGGKRKQLYSFFTGSGMGFEAFITHSGMLVVAVCTKREYATVMLPDHSFCDSLWHNITVVHMPGKRPFGQSFVYIYDNGQQKVSAPLRFPAMNEPFTSCCIGSAGQRTTTPPPSQIPDPPFSSPITPHRTSFGGILSSASWGGTIEKSKLITKLISAGTQDSEWGCPTSLEGQLGSVIIFYEPLQPPQVKALYLAGPNCLSPWKCQESDMADLPGNILLYYTAKACKNSICLDLSTNCLHGRLTGNKVVNWDIKDIINCIGGLNVLFPLLEQISHFSEGQIPEEKNESTVPESVTPVEGDWLVWTSTKASESRLERNLVATFILIVKHFIQRHPINQGNLIHSHGVATLGALLQKVPSTLMDVNVLMAVQLLIEQVSLEKNMQLLQQMYQYLLFDFRIWNRGDFPFRIGHIQYLSTIIKDSRRVFRKKYGVQFLLDTLRIYYGNGCKYNELSLDDIRTIRTSLYGLIKYFLCKGGSHEEIQSIMGYIAATNEEEQLFGILDVLFSLLRTSPTRGQLFLLLFEPGNADILYALLLNQKYSDRLREIIFKIMEQMLKCTNVYERSKQHIRLREVGYSGLGLLLNEALVNTSLIKNLTHQIINTDPVINFKDLLSVVYISHRAHINVRVAICRKVLQILQFQPDAAHQISQQVGWQDTLVRLFLKAKFENGNTLHKHSRAVLMKDNDKNMSTEDTKKNSDEKTDEEKITSFASANVSSDQWSLEDRHSLDSNTPLFPEDSSVGELSFKSENQEEFWHSNPSHLSLDLSGIDSCEMSDSGSQVPDSLPSTPSPVESTKSFSVHSDRESSITNDMGFSDDFSLLESQERCEEELLQLLTHILNYVMCKGLEKSDDDTWIERGQVFSALSKPGISSELLRPSDEIKLTLLQKMLEWAISENREAKTNPVTAENAFRLVLIIQDFLQSEGLVNSNMWTEKLLEDMMLLFDCLSVCYSESPVWVKLSQIQIQLLLGFIGRGNLQVCAMASAKLNTLLQTKVIENQDEACYILGKLEHVLSQSIKEQTEIYSFLIPLVRTLVSKIYELLFMNLHLPSLPFTNGSSSFFEDFQEYCNSNEWQVYIEKYIVPYMKQYEAHTFYDGHENMALYWKDCYEALMVNMHKRDREGGESKLKFQELFVEPFNRKARQENLRYNNMLKQLSSQQLATLRRWKAIQLYLTCERGPWAKRKQNPIHWKLANVENYSRMRLKLVPNYNFKTHEEASALRDNLGIQHSQPSSDTLLLEVVKQVKVSDMVEDKLDLPEEDITARVNVDEKEEQDQKEKLVLMEDCELITIIDVIPGRLEITTQHIYFYDGSIEKEDGVGFDFKWPHSQIREIHLRRYNLRRSALEIFHVDQSNYFLNFKKEVRNKIYSRLLSLHSPNSYYGSRSPQELFKASGLTQKWVNREISNFDYLIQINTMAGRTYNDLAQYPVFPWILQDYTSEELDLNNPAVFRDLSKPIGVVNEKNAKAMREKYENFEDPMGTIDKFHYGTHYSNSAGVMHYLIRVEPFTTLHIQLQSGRFDCADRQFHSIPATWQALMDNPYDVKELIPEFFYFPEFLENQNQFNLGRLQISKELVNDVILPKWAKSAEDFIYKHRKALESEYVSAHLHEWIDLIFGYKQRGPAAVEALNVFYYCSYEGAVDLDALTDEKERKALEGMINNFGQTPCQLLKEPHPPRLSAEEAVQKPTKIDTSTLNLFQHLPELKSFFIEGISDGIPLLKATIPKNQYRSFMSQGSPELLITISMNYVIGTHGWLPYDRNISNYFTFIKDQTVTNPKTQRSINGSFAPGLEITSKLFVVSHDAKLLFSAGYWDNSIQVMSLTKGKIISHIIRHMDIVTCLATDYCGIHLISGSRDTTCMIWQITQQGGVPVGLASKPFQILYGHTNEVLSVGISTELDMAVSGSRDGTVIIHTIQKGQYMRTLRPPCESSLFLTIPNLAISWEGHIVVYSSTEEKTTLKDKNALHLFSINGKYLGSQILKEQVSDICIIGEHIVTGSIQGFLSIRDLHSLNLSINPLAMRLPIHCVCVTKEYSHILVGLEDGKLIVVGVGKPAEMRSGQLSRKFWGSSKRLSQISAGETEYNTQDSK.

3 disordered regions span residues 1289–1314, 1330–1350, and 1381–1411; these read VLMK…TDEE, SLED…DSSV, and CEMS…SVHS. The span at 1290-1314 shows a compositional bias: basic and acidic residues; that stretch reads LMKDNDKNMSTEDTKKNSDEKTDEE. Positions 1383 to 1409 are enriched in polar residues; it reads MSDSGSQVPDSLPSTPSPVESTKSFSV. Positions 1883–1980 constitute a BEACH-type PH domain; that stretch reads DQKEKLVLME…VRNKIYSRLL (98 aa). Positions 1992 to 2284 constitute a BEACH domain; it reads RSPQELFKAS…QLLKEPHPPR (293 aa). WD repeat units lie at residues 2439 to 2478 and 2490 to 2531; these read RHMD…GVPV and GHTN…RTLR.

The protein belongs to the WD repeat neurobeachin family. In terms of tissue distribution, highly expressed in brain, kidney, prostate and testis. Weakly expressed in ovary, small intestine, colon and peripheral blood leukocytes. May be correlative to several tumors, such as ovary serous adenocarcinoma and metastasis mammary gland carcinoma breast.

The sequence is that of Neurobeachin-like protein 1 (NBEAL1) from Homo sapiens (Human).